Consider the following 380-residue polypeptide: Alcohol dehydrogenase 2 (380 aa).

C48, T50, H70, C100, C103, C106, C114, and C178 together coordinate Zn(2+). An alcohol contacts are provided by T50 and H70. T50 contacts NAD(+). Residues 203–208, D227, R232, T273, V296, 296–298, F323, and R373 contribute to the NAD(+) site; these read GLGAVG and VGV.

Belongs to the zinc-containing alcohol dehydrogenase family. In terms of assembly, homodimer. Homotetramer. The cofactor is Zn(2+).

Its subcellular location is the cytoplasm. The enzyme catalyses a primary alcohol + NAD(+) = an aldehyde + NADH + H(+). The catalysed reaction is a secondary alcohol + NAD(+) = a ketone + NADH + H(+). The protein is Alcohol dehydrogenase 2 (ADH2) of Solanum tuberosum (Potato).